The primary structure comprises 745 residues: Immunoglobulin superfamily containing leucine-rich repeat protein 2 (745 aa).

A signal peptide spans 1–18; sequence MFPLRALWLVWALLGVAG. The LRRNT domain occupies 19–51; that stretch reads SCPEPCACVDKYAHQFADCAYKELREVPEGLPA. Residues 19 to 589 are Extracellular-facing; it reads SCPEPCACVD…VFSTKKELPS (571 aa). N-linked (GlcNAc...) asparagine glycosylation is present at Asn52. LRR repeat units lie at residues 52 to 73, 76 to 97, 100 to 123, 124 to 145, and 148 to 169; these read NVTT…AFAD, QVTS…ALAV, QLKN…RNLS, ALQL…ALGA, and DLRS…TFDA. Asn121 carries N-linked (GlcNAc...) asparagine glycosylation. The LRRCT domain maps to 181–232; the sequence is NPFHCGCGLVWLQAWAASTRVSLPEPDSIACASPPALQGVPVYRLPALPCAP. Positions 233–371 constitute an Ig-like domain; it reads PSVHLSAEPP…GANSTSIRVA (139 aa). An intrachain disulfide couples Cys260 to Cys355. The disordered stretch occupies residues 287–326; the sequence is VLSGEDDGVGAEEGEGEGDGDLLTQTQAQTPTPAPAWPAP. Acidic residues predominate over residues 290 to 306; it reads GEDDGVGAEEGEGEGDG. Residues Asn337 and Asn364 are each glycosylated (N-linked (GlcNAc...) asparagine). The tract at residues 375–466 is disordered; it reads TGPPKHAPGA…QRCGNGDPSR (92 aa). Acidic residues predominate over residues 431–449; it reads TETEPEEDTSEGEEAEDQI. N-linked (GlcNAc...) asparagine glycosylation is found at Asn474 and Asn563. A helical transmembrane segment spans residues 590-610; that stretch reads LLVIVAVSVFLLVLATVPLLG. The Cytoplasmic portion of the chain corresponds to 611–745; sequence AACCHLLAKH…INGNYRQTAG (135 aa). Positions 656–722 are disordered; it reads KSYPAGGEAG…FEAGSEYSDR (67 aa). Acidic residues predominate over residues 665–683; the sequence is GGEEPEDVQGEGLDEDAEQ. Residue Tyr719 is modified to Phosphotyrosine. Ser720 is modified (phosphoserine).

In terms of assembly, homomultimer. Interacts with NTRK1/TrkA.

It localises to the cell membrane. Functionally, required for axon extension during neural development. The protein is Immunoglobulin superfamily containing leucine-rich repeat protein 2 (ISLR2) of Homo sapiens (Human).